The sequence spans 229 residues: Cytidylate kinase (229 aa).

Residue 12-20 (GPSGSGKGT) participates in ATP binding.

Belongs to the cytidylate kinase family. Type 1 subfamily.

It is found in the cytoplasm. The catalysed reaction is CMP + ATP = CDP + ADP. The enzyme catalyses dCMP + ATP = dCDP + ADP. The chain is Cytidylate kinase from Pseudomonas fluorescens (strain SBW25).